The following is a 78-amino-acid chain: MARVCQVTGKAPMVGNHVSHANNKTKRRFLPNLQNRRFWSEAENRWIRLRVSNAALRTIDKKGIDVVVAELRARGDKI.

It belongs to the bacterial ribosomal protein bL28 family.

The chain is Large ribosomal subunit protein bL28 from Azoarcus sp. (strain BH72).